Consider the following 358-residue polypeptide: Nuclear receptor subfamily 1 group I member 3 (358 aa).

The segment at residues 18–93 (PRNCVVCGDR…VGMRKDMILS (76 aa)) is a DNA-binding region (nuclear receptor). An NR C4-type zinc finger spans residues 21-41 (CVVCGDRATGYHFHALTCEGC). Phosphothreonine; by PKC is present on threonine 48. Residues 57 to 81 (CPFAGRCEVSKAQRRHCPACRLQKC) form an NR C4-type zinc finger. Positions 119-358 (QQKELVQILL…MTPLLGEICS (240 aa)) constitute an NR LBD domain.

Belongs to the nuclear hormone receptor family. NR1 subfamily. Heterodimer of NR1I3 and RXR. Interacts with PSMC4. Interacts with ECT2. Directly interacts with DNAJC7; this complex may also include HSP90. Interacts with CRY1. Interacts with CRY2 in a ligand-dependent manner. In terms of processing, phosphorylated at Thr-48 by PKC, dephosphorylation of Thr-48 is required for nuclear translocation and activation. As to expression, predominantly expressed in liver.

It localises to the nucleus. The protein localises to the cytoplasm. Its subcellular location is the cytoskeleton. Its function is as follows. Binds and transactivates the retinoic acid response elements that control expression of the retinoic acid receptor beta 2 and alcohol dehydrogenase 3 genes. Transactivates both the phenobarbital responsive element module of the human CYP2B6 gene and the CYP3A4 xenobiotic response element. The sequence is that of Nuclear receptor subfamily 1 group I member 3 (Nr1i3) from Mus musculus (Mouse).